The primary structure comprises 584 residues: Arginine--tRNA ligase (584 aa).

The 'HIGH' region motif lies at 127–137; sequence PNTNKPLHVGH.

It belongs to the class-I aminoacyl-tRNA synthetase family. In terms of assembly, monomer.

Its subcellular location is the cytoplasm. It catalyses the reaction tRNA(Arg) + L-arginine + ATP = L-arginyl-tRNA(Arg) + AMP + diphosphate. The chain is Arginine--tRNA ligase from Borrelia turicatae (strain 91E135).